The following is a 573-amino-acid chain: Flagellin B (573 aa).

The protein belongs to the bacterial flagellin family. In terms of assembly, heteromer of FlaA and FlaB. A flagellar filament composed exclusively of FlaA is indistinguishable in length from that of the wild-type and shows a slight reduction in motility. The flagellar filament composed exclusively of the FlaB is severely truncated in length and greatly reduced in motility. Thus, while both flagellins are not necessary for motility, both are required for a fully active flagellar filament.

The protein resides in the secreted. The protein localises to the bacterial flagellum. Flagellin is the subunit protein which polymerizes to form the filaments of bacterial flagella. The protein is Flagellin B (flaB) of Campylobacter coli.